The chain runs to 279 residues: 3-methyl-2-oxobutanoate hydroxymethyltransferase (279 aa).

Positions 43 and 82 each coordinate Mg(2+). 3-methyl-2-oxobutanoate contacts are provided by residues 43-44, D82, and K112; that span reads DS. E114 lines the Mg(2+) pocket. E181 functions as the Proton acceptor in the catalytic mechanism.

It belongs to the PanB family. Homodecamer; pentamer of dimers. It depends on Mg(2+) as a cofactor.

The protein resides in the cytoplasm. It catalyses the reaction 3-methyl-2-oxobutanoate + (6R)-5,10-methylene-5,6,7,8-tetrahydrofolate + H2O = 2-dehydropantoate + (6S)-5,6,7,8-tetrahydrofolate. The protein operates within cofactor biosynthesis; (R)-pantothenate biosynthesis; (R)-pantoate from 3-methyl-2-oxobutanoate: step 1/2. In terms of biological role, catalyzes the reversible reaction in which hydroxymethyl group from 5,10-methylenetetrahydrofolate is transferred onto alpha-ketoisovalerate to form ketopantoate. The polypeptide is 3-methyl-2-oxobutanoate hydroxymethyltransferase (Exiguobacterium sibiricum (strain DSM 17290 / CCUG 55495 / CIP 109462 / JCM 13490 / 255-15)).